The sequence spans 323 residues: Muscleblind-like protein 3 (323 aa).

4 consecutive C3H1-type zinc fingers follow at residues 13-41 (WLTL…HPSR), 47-73 (NGRV…HPPP), 177-205 (TDKL…HPLE), and 213-239 (ENSV…HPPA).

This sequence belongs to the muscleblind family. In terms of tissue distribution, expressed in fast and slow myotomal muscle, heart, liver, skin, brain and testis.

The protein resides in the nucleus. It localises to the cytoplasm. Functionally, involved in pre-mRNA alternative splicing regulation. Could inhibit terminal muscle differentiation, acting at approximately the time of myogenin induction. The sequence is that of Muscleblind-like protein 3 (mbnl3) from Takifugu rubripes (Japanese pufferfish).